Consider the following 87-residue polypeptide: UPF0250 protein Spro_1197 (87 aa).

The protein belongs to the UPF0250 family.

This Serratia proteamaculans (strain 568) protein is UPF0250 protein Spro_1197.